The chain runs to 27 residues: CD59 glycoprotein (27 aa).

2 disulfide bridges follow: Cys3–Cys25 and Cys6–Cys12. The N-linked (GlcNAc...) asparagine glycan is linked to Asn17.

In terms of assembly, interacts with T-cell surface antigen CD2. N- and O-glycosylated. Expressed in erythrocytes and lymphocytes. Not detected in platelets.

Its subcellular location is the cell membrane. It is found in the secreted. Functionally, potent inhibitor of the complement membrane attack complex (MAC) action, which protects self-cells from damage during complement activation. Acts by binding to the beta-haipins of C8 (C8A and C8B) components of the assembling MAC, forming an intermolecular beta-sheet that prevents incorporation of the multiple copies of C9 required for complete formation of the osmolytic pore. The sequence is that of CD59 glycoprotein from Ovis aries (Sheep).